Consider the following 381-residue polypeptide: Subtilisin E (381 aa).

The first 29 residues, 1–29 (MRSKKLWISLLFALTLIFTMAFSNMSAQA), serve as a signal peptide directing secretion. Positions 30 to 106 (AGKSSTEKKY…VEEDHIAHEY (77 aa)) are excised as a propeptide. Residues 38–103 (KYIVGFKQTM…VAYVEEDHIA (66 aa)) enclose the Inhibitor I9 domain. A Ca(2+)-binding site is contributed by Q108. One can recognise a Peptidase S8 domain in the interval 111 to 380 (PYGISQIKAP…KGLINVQAAA (270 aa)). Catalysis depends on D138, which acts as the Charge relay system. D147 serves as a coordination point for Ca(2+). The Charge relay system role is filled by H170. Ca(2+)-binding residues include L181, N183, I185, V187, A275, Y277, T280, and D303. The active-site Charge relay system is S327.

Belongs to the peptidase S8 family. Ca(2+) serves as cofactor.

Its subcellular location is the secreted. The catalysed reaction is Hydrolysis of proteins with broad specificity for peptide bonds, and a preference for a large uncharged residue in P1. Hydrolyzes peptide amides.. Inhibited by PMSF (phenylmethylsulphonyl fluoride) and 3,4-dichloroisocoumarin but not by EDTA (shown for strain RT-5). In terms of biological role, an extracellular alkaline serine protease, it catalyzes the hydrolysis of proteins and peptide amides. This chain is Subtilisin E, found in Bacillus subtilis (strain 168).